The chain runs to 538 residues: Exo-alpha-bergamotene synthase (538 aa).

Mg(2+) contacts are provided by D291, D295, D435, T439, and E443. The DDXXD motif motif lies at 291-295; it reads DDIYD.

It belongs to the terpene synthase family. The cofactor is Mg(2+). Requires Mn(2+) as cofactor.

The catalysed reaction is (2E,6E)-farnesyl diphosphate = (1S,5S,6R)-alpha-bergamotene + diphosphate. Functionally, catalyzes a mixture of sesquiterpenoids from (2E,6E)-farnesyl diphosphate. Catalyzes the formation of exo-alpha-bergamotene, as well as (E)-nerolidol, (Z)-alpha-bisabolene, (E)-beta-farnesene and beta-sesquiphellandrene. Also has activity towards geranyl diphosphate, but to a much lesser extent. This chain is Exo-alpha-bergamotene synthase, found in Lavandula angustifolia (Lavender).